The primary structure comprises 286 residues: Divergent deoxyribose-phosphate aldolase-like protein (286 aa).

As to quaternary structure, homodimer. Interacts with ADF; the interaction enhances ADF activity in disassembly of filamentous actin and inhibition of actin polymerization.

It localises to the cytoplasm. Functionally, involved in regulation of actin dynamics. In Toxoplasma gondii, this protein is Divergent deoxyribose-phosphate aldolase-like protein.